A 586-amino-acid chain; its full sequence is Aspartate--tRNA(Asp/Asn) ligase (586 aa).

Residue glutamate 172 participates in L-aspartate binding. The tract at residues glutamine 196–lysine 199 is aspartate. Residue arginine 218 coordinates L-aspartate. Residues arginine 218–glutamate 220 and glutamine 227 each bind ATP. Histidine 446 lines the L-aspartate pocket. Glutamate 480 lines the ATP pocket. Arginine 487 contributes to the L-aspartate binding site. Glycine 532–arginine 535 contributes to the ATP binding site.

It belongs to the class-II aminoacyl-tRNA synthetase family. Type 1 subfamily. In terms of assembly, homodimer.

The protein localises to the cytoplasm. The catalysed reaction is tRNA(Asx) + L-aspartate + ATP = L-aspartyl-tRNA(Asx) + AMP + diphosphate. Aspartyl-tRNA synthetase with relaxed tRNA specificity since it is able to aspartylate not only its cognate tRNA(Asp) but also tRNA(Asn). Reaction proceeds in two steps: L-aspartate is first activated by ATP to form Asp-AMP and then transferred to the acceptor end of tRNA(Asp/Asn). The sequence is that of Aspartate--tRNA(Asp/Asn) ligase from Borreliella afzelii (strain PKo) (Borrelia afzelii).